Here is a 1571-residue protein sequence, read N- to C-terminus: Phospholipid-transporting ATPase DNF1 (1571 aa).

The disordered stretch occupies residues 1-94; it reads MSGTFHGDGH…TPKLNNGSGT (94 aa). The Cytoplasmic portion of the chain corresponds to 1–214; that stretch reads MSGTFHGDGH…TFLPKNILFQ (214 aa). Over residues 29–40 the composition is skewed to basic and acidic residues; the sequence is EDTHIAPTHFDD. The span at 42-56 shows a compositional bias: polar residues; it reads ATSNKYSRPQVSFND. Ser-53 carries the phosphoserine modification. The span at 66–76 shows a compositional bias: acidic residues; that stretch reads AEEFTFNDDTE. At Thr-70 the chain carries Phosphothreonine. Over residues 80–93 the composition is skewed to polar residues; the sequence is HSFQPTPKLNNGSG. Phosphoserine is present on Ser-81. Residue Thr-85 is modified to Phosphothreonine. Ser-92 carries the phosphoserine modification. At Thr-94 the chain carries Phosphothreonine. A Phosphoserine modification is found at Ser-104. Phosphothreonine is present on Thr-109. The helical transmembrane segment at 215–235 threads the bilayer; sequence FHNFANVYFLVLIILGAFQIF. Residues 234 to 241 are involved in phosphatidylcholine substrate selection; the sequence is IFGVTNPG. The Extracellular segment spans residues 236-239; sequence GVTN. A helical transmembrane segment spans residues 240–260; sequence PGLSAVPLVVIVIITAIKDAI. At 261 to 553 the chain is on the cytoplasmic side; the sequence is EDSRRTVLDL…RISRELNFSV (293 aa). Residues Ser-351, Ser-354, Ser-358, and Ser-365 each carry the phosphoserine modification. Tyr-368 is modified (phosphotyrosine). A helical membrane pass occupies residues 554–574; sequence VINFVLLFILCFVSGIANGVY. The Extracellular portion of the chain corresponds to 575–594; sequence YDKKGRSRFSYEFGTIAGSA. The involved in phosphatidylcholine substrate selection stretch occupies residues 586–590; that stretch reads EFGTI. A helical transmembrane segment spans residues 595–615; the sequence is ATNGFVSFWVAVILYQSLVPI. At 616-1188 the chain is on the cytoplasmic side; sequence SLYISVEIIK…WSYKRLAEMI (573 aa). The active-site 4-aspartylphosphate intermediate is the Asp-667. Asp-667, Lys-668, Thr-669, Glu-801, Phe-842, Ser-844, Lys-847, and Lys-871 together coordinate ATP. Asp-667 contacts Mg(2+). Thr-669 is a binding site for Mg(2+). Residue Lys-895 forms a Glycyl lysine isopeptide (Lys-Gly) (interchain with G-Cter in ubiquitin) linkage. Arg-909, Thr-910, Thr-989, Gly-990, Asp-991, Arg-1104, and Lys-1110 together coordinate ATP. Asp-1130 serves as a coordination point for Mg(2+). Residues Asn-1133 and Asp-1134 each contribute to the ATP site. Asp-1134 serves as a coordination point for Mg(2+). A helical membrane pass occupies residues 1189–1209; it reads PEFFYKNMIFALALFWYGIYN. At 1210-1219 the chain is on the extracellular side; sequence DFDGSYLYEY. A helical transmembrane segment spans residues 1220 to 1240; the sequence is TYMMFYNLAFTSLPVIFLGIL. Over 1241-1270 the chain is Cytoplasmic; that stretch reads DQDVNDTISLVVPQLYRVGILRKEWNQRKF. A helical membrane pass occupies residues 1271-1291; the sequence is LWYMLDGLYQSIICFFFPYLV. Over 1292–1307 the chain is Extracellular; that stretch reads YHKNMIVTSNGLGLDH. Residues 1308-1328 traverse the membrane as a helical segment; the sequence is RYFVGVYVTTIAVISCNTYVL. The Cytoplasmic portion of the chain corresponds to 1329-1334; it reads LHQYRW. A helical membrane pass occupies residues 1335-1355; that stretch reads DWFSGLFIALSCLVVFAWTGI. Residues 1356-1375 lie on the Extracellular side of the membrane; the sequence is WSSAIASREFFKAAARIYGA. A helical transmembrane segment spans residues 1376-1396; sequence PSFWAVFFVAVLFCLLPRFTY. Arg-1393 serves as a coordination point for a 1,2-diacyl-sn-glycero-3-phospho-L-serine. Over 1397 to 1571 the chain is Cytoplasmic; sequence DSFQKFFYPT…ASLIGTQQNN (175 aa). Position 1506 is a phosphoserine (Ser-1506). Position 1551 is a phosphothreonine (Thr-1551). Residues Ser-1552 and Ser-1563 each carry the phosphoserine modification.

It belongs to the cation transport ATPase (P-type) (TC 3.A.3) family. Type IV subfamily. In terms of assembly, component of a flippase complex consisting of DNF1 and LEM3. Interacts with LEM3; the interaction is direct and required for their mutual export from the endoplasmic reticulum. Mg(2+) is required as a cofactor. In terms of processing, phosphorylated by FPK1 and KIN82.

It localises to the cell membrane. It is found in the endosome membrane. Its subcellular location is the golgi apparatus. The protein localises to the trans-Golgi network membrane. The protein resides in the cell septum. It localises to the bud. It catalyses the reaction ATP + H2O + phospholipidSide 1 = ADP + phosphate + phospholipidSide 2.. The enzyme catalyses a 1,2-diacyl-sn-glycero-3-phosphoethanolamine(out) + ATP + H2O = a 1,2-diacyl-sn-glycero-3-phosphoethanolamine(in) + ADP + phosphate + H(+). It carries out the reaction a 1,2-diacyl-sn-glycero-3-phosphocholine(out) + ATP + H2O = a 1,2-diacyl-sn-glycero-3-phosphocholine(in) + ADP + phosphate + H(+). The catalysed reaction is a beta-D-glucosyl-(1&lt;-&gt;1')-N-acylsphing-4-enine(out) + ATP + H2O = a beta-D-glucosyl-(1&lt;-&gt;1')-N-acylsphing-4-enine(in) + ADP + phosphate + H(+). It catalyses the reaction a 1,2-diacyl-sn-glycero-3-phospho-L-serine(out) + ATP + H2O = a 1,2-diacyl-sn-glycero-3-phospho-L-serine(in) + ADP + phosphate + H(+). Its function is as follows. Catalytic component of a P4-ATPase flippase complex which catalyzes the hydrolysis of ATP coupled to the transport of glucosylceramide, phosphatidylcholine, phosphatidylethanolamine, and small amounts of phosphatidylserine from the lumenal to the cytosolic leaflet of the cell membrane and ensures the maintenance of asymmetric distribution of phospholipids. Does not appear to transport sphingomyelin, inositol phosphoceramide, or phosphatidic acid. Required for efficient endocytosis. This Saccharomyces cerevisiae (strain ATCC 204508 / S288c) (Baker's yeast) protein is Phospholipid-transporting ATPase DNF1.